We begin with the raw amino-acid sequence, 781 residues long: Penicillin-binding protein 1B (781 aa).

The segment at 151-322 (FRLAPKLIAM…SLYNPWRNPQ (172 aa)) is transglycosylase. The active-site Proton donor; for transglycosylase activity is the Glu188. The interval 415–702 (SQLQLKMKNP…ALQIYKDYLN (288 aa)) is transpeptidase. The Acyl-ester intermediate; for transpeptidase activity role is filled by Ser466. Residues 749–768 (ETSSPSLTPTTETETPPQES) are compositionally biased toward low complexity. Residues 749–781 (ETSSPSLTPTTETETPPQESLWDVLDNPNPPAQ) form a disordered region.

It in the N-terminal section; belongs to the glycosyltransferase 51 family. The protein in the C-terminal section; belongs to the transpeptidase family.

The protein resides in the cell inner membrane. The catalysed reaction is [GlcNAc-(1-&gt;4)-Mur2Ac(oyl-L-Ala-gamma-D-Glu-L-Lys-D-Ala-D-Ala)](n)-di-trans,octa-cis-undecaprenyl diphosphate + beta-D-GlcNAc-(1-&gt;4)-Mur2Ac(oyl-L-Ala-gamma-D-Glu-L-Lys-D-Ala-D-Ala)-di-trans,octa-cis-undecaprenyl diphosphate = [GlcNAc-(1-&gt;4)-Mur2Ac(oyl-L-Ala-gamma-D-Glu-L-Lys-D-Ala-D-Ala)](n+1)-di-trans,octa-cis-undecaprenyl diphosphate + di-trans,octa-cis-undecaprenyl diphosphate + H(+). It carries out the reaction Preferential cleavage: (Ac)2-L-Lys-D-Ala-|-D-Ala. Also transpeptidation of peptidyl-alanyl moieties that are N-acyl substituents of D-alanine.. It functions in the pathway cell wall biogenesis; peptidoglycan biosynthesis. Its function is as follows. Cell wall formation. Synthesis of cross-linked peptidoglycan from the lipid intermediates. The enzyme has a penicillin-insensitive transglycosylase N-terminal domain (formation of linear glycan strands) and a penicillin-sensitive transpeptidase C-terminal domain (cross-linking of the peptide subunits). The sequence is that of Penicillin-binding protein 1B (mrcB) from Haemophilus influenzae (strain ATCC 51907 / DSM 11121 / KW20 / Rd).